The primary structure comprises 2800 residues: Probable serine/threonine-protein kinase roco5 (2800 aa).

Residues 1–61 (MEVIKKEKKD…EKEKDKEKDG (61 aa)) show a composition bias toward basic and acidic residues. Disordered stretches follow at residues 1–92 (MEVI…SAQS), 123–225 (TTTT…SPVD), and 417–437 (GINSANSNNNNNNSGGGSSGI). Positions 77-86 (PTPPPPPPPS) are enriched in pro residues. Composition is skewed to low complexity over residues 123–134 (TTTTTTTTSSNN) and 143–170 (NNNTSNNNINNNNKTSNTTGSNVSSSNN). Over residues 176–190 (INVTSLDSGGNNNAS) the composition is skewed to polar residues. Over residues 194–218 (ISNEHSPKNRKEKEKEKDKDNKEDS) the composition is skewed to basic and acidic residues. The DH domain maps to 227-508 (NRRKLVEGFM…VQVVKDIVNE (282 aa)). Low complexity predominate over residues 417–429 (GINSANSNNNNNN). One can recognise a PH domain in the interval 540 to 649 (KFLKEGILIE…WFQVLSQASL (110 aa)). 4 LRR repeats span residues 777-800 (NKSITHLTLSQNSINDPCAVALGD), 805-832 (NHSLIQMDLSENTIADKGLISLIDGILS), 834-856 (PSITVVILTQNQITDTGAKHISK), and 861-885 (NQTLNALFLEDNNITQSMGAEIIDQ). A disordered region spans residues 926-946 (KQLQVNQKSTTPSTSTSTTSS). Residues 934 to 946 (STTPSTSTSTTSS) are compositionally biased toward low complexity. LRR repeat units follow at residues 971-984 (LNKLNMLSLDSRRI), 985-1007 (SDLKELYLDHNCISSIPVSILKE), 1008-1031 (LKNLQILDLSNNQLSSLPSEISEM), 1033-1056 (ELKLLNVSHNNLSSLPIELGTLCK), 1058-1077 (NHLDISFNFIETINVNSLSQ), 1078-1101 (LVNLKVLMMQRNYFNRLPIEIFTR), 1128-1151 (AIKATKLDLSDCGLSALPIEIGSI), 1152-1174 (SSLIELDLTNNRIKDLPPQIGKL), 1175-1197 (SSLQTLNLSNNAIESLPWQLSQL), and 1199-1222 (TLKVLNITGNPISFDGASNAKISI). Residues 1244–1464 (KEKPCMRMKL…NHIVKLGKAE (221 aa)) enclose the Roc domain. GTP is bound by residues 1257 to 1264 (GQENVGKT), 1348 to 1352 (DFAGQ), and 1407 to 1410 (THLD). The region spanning 1473 to 1604 (RSYFQLENLI…KFEIVHPLPD (132 aa)) is the COR 1 domain. Disordered regions lie at residues 1605–1665 (PKAT…SLLN) and 1688–1711 (DQSTSPSNSTTPSPNTSSNNFSDS). 3 stretches are compositionally biased toward low complexity: residues 1610-1645 (SSSSSSPSTTQKSLNNSGSNLKSSGSAISTSSSSTT), 1653-1665 (RTNSTTNTTSLLN), and 1688-1707 (DQSTSPSNSTTPSPNTSSNN). The COR 2 domain occupies 1717–1790 (KSSTKHLVPI…VKEFWKNGLL (74 aa)). The segment covering 1886–2008 (SQQQHHQQQQ…LNPDSTSSSN (123 aa)) has biased composition (low complexity). Disordered stretches follow at residues 1886 to 2011 (SQQQ…NETS) and 2050 to 2070 (RNTNKPKINGTTGSGSSSSIV). A compositionally biased stretch (polar residues) spans 2050–2059 (RNTNKPKING). In terms of domain architecture, Protein kinase spans 2175–2440 (LEIIEKVGEG…PTFIDIHSRL (266 aa)). ATP is bound by residues 2181–2189 (VGEGGFGIV) and K2202. D2300 acts as the Proton acceptor in catalysis. Low complexity-rich tracts occupy residues 2452-2490 (TTTNSAKSTISTGFNSNSGATTTTKPKSSTISSGSGTTS), 2583-2654 (LKTP…SPIS), 2669-2685 (TTQTTSTPPTNQTPNPT), and 2694-2704 (SSLSSNSINKP). Disordered regions lie at residues 2452–2498 (TTTN…HPQL) and 2544–2800 (AGGN…AIPK). Pro residues predominate over residues 2705–2723 (PSKPLPTPGGVTSPPPPPT). The span at 2730–2756 (IKFNSISAGNKTIGQSSTLPSSTLKQF) shows a compositional bias: polar residues. The span at 2757–2787 (TANNNTSPSGSSSLPNSTVSSPSSSFLLRPT) shows a compositional bias: low complexity.

This sequence belongs to the protein kinase superfamily. TKL Ser/Thr protein kinase family. ROCO subfamily.

It catalyses the reaction L-seryl-[protein] + ATP = O-phospho-L-seryl-[protein] + ADP + H(+). The enzyme catalyses L-threonyl-[protein] + ATP = O-phospho-L-threonyl-[protein] + ADP + H(+). Its function is as follows. May act as a serine/threonine-protein kinase and guanine-nucleotide releasing factor. In Dictyostelium discoideum (Social amoeba), this protein is Probable serine/threonine-protein kinase roco5 (roco5).